The sequence spans 347 residues: Eukaryotic translation initiation factor 3 subunit H (347 aa).

An MPN domain is found at 6 to 149 (VCIDSSVALK…PSSTGPQGHT (144 aa)). Residues 136 to 155 (SDTDPSSTGPQGHTTTTPSG) form a disordered region. Residues 138–155 (TDPSSTGPQGHTTTTPSG) are compositionally biased toward polar residues.

This sequence belongs to the eIF-3 subunit H family. As to quaternary structure, component of the eukaryotic translation initiation factor 3 (eIF-3) complex.

It is found in the cytoplasm. Functionally, component of the eukaryotic translation initiation factor 3 (eIF-3) complex, which is involved in protein synthesis of a specialized repertoire of mRNAs and, together with other initiation factors, stimulates binding of mRNA and methionyl-tRNAi to the 40S ribosome. The eIF-3 complex specifically targets and initiates translation of a subset of mRNAs involved in cell proliferation. This Yarrowia lipolytica (strain CLIB 122 / E 150) (Yeast) protein is Eukaryotic translation initiation factor 3 subunit H.